The following is a 750-amino-acid chain: Ribosomal RNA large subunit methyltransferase K/L (750 aa).

The THUMP domain occupies 46–157 (TAYRLCLWSR…RGEAILSLDL (112 aa)).

Belongs to the methyltransferase superfamily. RlmKL family.

It is found in the cytoplasm. It catalyses the reaction guanosine(2445) in 23S rRNA + S-adenosyl-L-methionine = N(2)-methylguanosine(2445) in 23S rRNA + S-adenosyl-L-homocysteine + H(+). The enzyme catalyses guanosine(2069) in 23S rRNA + S-adenosyl-L-methionine = N(2)-methylguanosine(2069) in 23S rRNA + S-adenosyl-L-homocysteine + H(+). Specifically methylates the guanine in position 2445 (m2G2445) and the guanine in position 2069 (m7G2069) of 23S rRNA. This is Ribosomal RNA large subunit methyltransferase K/L from Pseudomonas syringae pv. syringae (strain B728a).